Here is a 94-residue protein sequence, read N- to C-terminus: Integration host factor subunit beta (94 aa).

It belongs to the bacterial histone-like protein family. In terms of assembly, heterodimer of an alpha and a beta chain.

Functionally, this protein is one of the two subunits of integration host factor, a specific DNA-binding protein that functions in genetic recombination as well as in transcriptional and translational control. The polypeptide is Integration host factor subunit beta (Sodalis glossinidius (strain morsitans)).